Consider the following 98-residue polypeptide: NADH-ubiquinone oxidoreductase chain 4L (98 aa).

The next 3 membrane-spanning stretches (helical) occupy residues 1 to 21, 29 to 49, and 61 to 81; these read MSMV…GLLM, SLLC…MTIL, and IILL…LVMV.

It belongs to the complex I subunit 4L family. As to quaternary structure, core subunit of respiratory chain NADH dehydrogenase (Complex I) which is composed of 45 different subunits.

It localises to the mitochondrion inner membrane. The catalysed reaction is a ubiquinone + NADH + 5 H(+)(in) = a ubiquinol + NAD(+) + 4 H(+)(out). In terms of biological role, core subunit of the mitochondrial membrane respiratory chain NADH dehydrogenase (Complex I) which catalyzes electron transfer from NADH through the respiratory chain, using ubiquinone as an electron acceptor. Part of the enzyme membrane arm which is embedded in the lipid bilayer and involved in proton translocation. This chain is NADH-ubiquinone oxidoreductase chain 4L (MT-ND4L), found in Phocarctos hookeri (Hooker's sea lion).